The chain runs to 90 residues: Delta-aiptatoxin-Adi1a (90 aa).

An N-terminal signal peptide occupies residues 1-21; the sequence is MKTAMLIAVLGFCAALCFVES. Positions 22-44 are excised as a propeptide; that stretch reads SHEEEREAAVYLTDLVSKAESAI. 3 disulfides stabilise this stretch: C50/C86, C52/C77, and C70/C87.

Belongs to the sea anemone sodium channel inhibitory toxin family.

It is found in the secreted. It localises to the nematocyst. Functionally, cardioactive peptide that acts on voltage-gated sodium channels (hNav1.5/SCN5A) and voltage-gated potassium channels (Kv). The activity on sodium channels consists of inhibition on sodium current inactivation with no significant effect on current activation. This effect may be caused by direct interaction of the toxin with sodium channel site-3. The activity on potassium channels consists of a significant increase of the amplitude of the transient component of the potassium current, shifting the current threshold to more negative membrane potentials. These effects are concentration-dependent and reversible and may be due to a direct interaction between the toxin and the voltage-sensing domain of the channel. Physiologically, this toxin increases the amplitude of cardiomyocyte contraction and slows the late phase of the twitch relaxation velocity with no induction of spontaneous twitching. It increases action potential duration of cardiomyocytes with no effect on its threshold and on the cell resting potential. On insects, it shows neurotoxic activity to the blowfly larvae S.falculaty, causing an immediate spasm that progressed to body contraction and paralysis. This is Delta-aiptatoxin-Adi1a from Exaiptasia diaphana (Tropical sea anemone).